Here is a 432-residue protein sequence, read N- to C-terminus: Adenylosuccinate synthetase (432 aa).

GTP-binding positions include 12 to 18 (GDEGKGK) and 40 to 42 (GHT). The active-site Proton acceptor is the Asp-13. Positions 13 and 40 each coordinate Mg(2+). IMP is bound by residues 13 to 16 (DEGK), 38 to 41 (NAGH), Thr-132, Arg-146, Gln-226, Thr-241, and Arg-305. The active-site Proton donor is His-41. Residue 301-307 (VVTGRKR) participates in substrate binding. Residues Arg-307, 333-335 (KLD), and 415-417 (STS) each bind GTP.

It belongs to the adenylosuccinate synthetase family. Homodimer. Requires Mg(2+) as cofactor.

The protein localises to the cytoplasm. The catalysed reaction is IMP + L-aspartate + GTP = N(6)-(1,2-dicarboxyethyl)-AMP + GDP + phosphate + 2 H(+). Its pathway is purine metabolism; AMP biosynthesis via de novo pathway; AMP from IMP: step 1/2. In terms of biological role, plays an important role in the de novo pathway of purine nucleotide biosynthesis. Catalyzes the first committed step in the biosynthesis of AMP from IMP. The chain is Adenylosuccinate synthetase from Rhizobium leguminosarum bv. trifolii (strain WSM2304).